The following is a 169-amino-acid chain: Pyrophosphate-energized proton pump 1 (169 aa).

A run of 3 helical transmembrane segments spans residues 45-65, 114-134, and 141-161; these read YVVA…GIAM, VIPS…VLLI, and AFAA…LVAI.

This sequence belongs to the H(+)-translocating pyrophosphatase (TC 3.A.10) family. In terms of assembly, homodimer. The cofactor is Mg(2+).

It is found in the cell inner membrane. The enzyme catalyses diphosphate + H2O + H(+)(in) = 2 phosphate + 2 H(+)(out). Its function is as follows. Proton pump that utilizes the energy of pyrophosphate hydrolysis as the driving force for proton movement across the membrane. Generates a proton motive force. This chain is Pyrophosphate-energized proton pump 1 (hppA1), found in Rhizobium leguminosarum bv. trifolii.